Reading from the N-terminus, the 509-residue chain is ATP synthase subunit alpha (509 aa).

169 to 176 (GDRQTGKT) is a binding site for ATP.

Belongs to the ATPase alpha/beta chains family. In terms of assembly, F-type ATPases have 2 components, CF(1) - the catalytic core - and CF(0) - the membrane proton channel. CF(1) has five subunits: alpha(3), beta(3), gamma(1), delta(1), epsilon(1). CF(0) has three main subunits: a(1), b(2) and c(9-12). The alpha and beta chains form an alternating ring which encloses part of the gamma chain. CF(1) is attached to CF(0) by a central stalk formed by the gamma and epsilon chains, while a peripheral stalk is formed by the delta and b chains.

The protein resides in the cell inner membrane. It catalyses the reaction ATP + H2O + 4 H(+)(in) = ADP + phosphate + 5 H(+)(out). In terms of biological role, produces ATP from ADP in the presence of a proton gradient across the membrane. The alpha chain is a regulatory subunit. In Rhizobium etli (strain ATCC 51251 / DSM 11541 / JCM 21823 / NBRC 15573 / CFN 42), this protein is ATP synthase subunit alpha.